Reading from the N-terminus, the 484-residue chain is PTS system MurNAc-GlcNAc-specific EIIBC component (484 aa).

One can recognise a PTS EIIB type-1 domain in the interval Gln-5–Asp-87. Catalysis depends on Cys-27, which acts as the Phosphocysteine intermediate; for EIIB activity. Residues Lys-130–Asp-484 enclose the PTS EIIC type-1 domain. Transmembrane regions (helical) follow at residues Ile-135 to Val-155, Met-160 to Ile-180, Phe-200 to Ala-220, Leu-234 to Val-254, Ile-274 to Val-294, Ile-305 to Val-325, Leu-349 to Val-369, Ala-384 to Leu-404, Phe-408 to Ile-428, and Leu-450 to Phe-470.

The protein localises to the cell membrane. It catalyses the reaction N-acetyl-beta-D-muramate-(1-&gt;4)-N-acetyl-D-glucosamine(out) + N(pros)-phospho-L-histidyl-[protein] = 6-phospho-N-acetyl-beta-D-muramate-(1-&gt;4)-N-acetyl-D-glucosamine(in) + L-histidyl-[protein]. It functions in the pathway cell wall biogenesis; peptidoglycan recycling. In terms of biological role, the phosphoenolpyruvate-dependent sugar phosphotransferase system (sugar PTS), a major carbohydrate active transport system, catalyzes the phosphorylation of incoming sugar substrates concomitantly with their translocation across the cell membrane. This system is involved in the uptake and phosphorylation of MurNAc-GlcNAc, the principle peptidoglycan turnover product of S.aureus, yielding cytoplasmic MurNAc 6P-GlcNAc. The protein is PTS system MurNAc-GlcNAc-specific EIIBC component of Staphylococcus aureus (strain bovine RF122 / ET3-1).